The primary structure comprises 1289 residues: DNA-directed RNA polymerase subunit beta (1289 aa).

This sequence belongs to the RNA polymerase beta chain family. In terms of assembly, the RNAP catalytic core consists of 2 alpha, 1 beta, 1 beta' and 1 omega subunit. When a sigma factor is associated with the core the holoenzyme is formed, which can initiate transcription.

The enzyme catalyses RNA(n) + a ribonucleoside 5'-triphosphate = RNA(n+1) + diphosphate. In terms of biological role, DNA-dependent RNA polymerase catalyzes the transcription of DNA into RNA using the four ribonucleoside triphosphates as substrates. This Methylacidiphilum infernorum (isolate V4) (Methylokorus infernorum (strain V4)) protein is DNA-directed RNA polymerase subunit beta.